Reading from the N-terminus, the 540-residue chain is Pentatricopeptide repeat-containing protein At3g29290 (540 aa).

PPR repeat units lie at residues 106 to 140 (NEET…GLQP), 141 to 175 (NAHA…ENVT), 177 to 205 (HTYS…LERE), 213 to 247 (DVVL…GHIG), 248 to 282 (TEIT…KISL), 283 to 317 (REDA…GMKP), 318 to 352 (NLVA…GHKP), 353 to 387 (DEYT…NLCC), 389 to 423 (NEYL…GLTV), 424 to 458 (STSS…DCKP), 459 to 487 (NTFT…KKVE), and 489 to 523 (DVSL…GLEP).

The protein belongs to the PPR family. P subfamily.

The protein is Pentatricopeptide repeat-containing protein At3g29290 (EMB2076) of Arabidopsis thaliana (Mouse-ear cress).